A 338-amino-acid polypeptide reads, in one-letter code: Tetraacyldisaccharide 4'-kinase (338 aa).

An ATP-binding site is contributed by 51 to 58 (HLGGAGKT).

This sequence belongs to the LpxK family.

The enzyme catalyses a lipid A disaccharide + ATP = a lipid IVA + ADP + H(+). It functions in the pathway glycolipid biosynthesis; lipid IV(A) biosynthesis; lipid IV(A) from (3R)-3-hydroxytetradecanoyl-[acyl-carrier-protein] and UDP-N-acetyl-alpha-D-glucosamine: step 6/6. Transfers the gamma-phosphate of ATP to the 4'-position of a tetraacyldisaccharide 1-phosphate intermediate (termed DS-1-P) to form tetraacyldisaccharide 1,4'-bis-phosphate (lipid IVA). This chain is Tetraacyldisaccharide 4'-kinase, found in Rhodopseudomonas palustris (strain HaA2).